Reading from the N-terminus, the 238-residue chain is tRNA (guanine-N(7)-)-methyltransferase (238 aa).

Glu-68, Glu-93, Asp-120, and Asp-143 together coordinate S-adenosyl-L-methionine. Asp-143 is a catalytic residue. Substrate-binding positions include Lys-147, Asp-179, and 216-219 (TKFE).

This sequence belongs to the class I-like SAM-binding methyltransferase superfamily. TrmB family.

The catalysed reaction is guanosine(46) in tRNA + S-adenosyl-L-methionine = N(7)-methylguanosine(46) in tRNA + S-adenosyl-L-homocysteine. It functions in the pathway tRNA modification; N(7)-methylguanine-tRNA biosynthesis. Functionally, catalyzes the formation of N(7)-methylguanine at position 46 (m7G46) in tRNA. This is tRNA (guanine-N(7)-)-methyltransferase from Shewanella baltica (strain OS223).